A 502-amino-acid chain; its full sequence is Maturase K (502 aa).

Belongs to the intron maturase 2 family. MatK subfamily.

It is found in the plastid. The protein localises to the chloroplast. Usually encoded in the trnK tRNA gene intron. Probably assists in splicing its own and other chloroplast group II introns. This is Maturase K from Ipomoea purpurea (Common morning glory).